The chain runs to 252 residues: ELH type 2 (252 aa).

Positions 1–19 (AISLLMCLILSALCASSES) are cleaved as a signal peptide. 3 propeptides span residues 20-75 (AVVH…VNNE), 92-130 (PQEV…QREL), and 144-185 (AAGD…SGIA). Basic and acidic residues predominate over residues 145-161 (AGDEDKAEEHNPETESH). A disordered region spans residues 145–171 (AGDEDKAEEHNPETESHSRRKRSALTP). K222 is subject to Lysine amide.

The protein belongs to the molluscan ELH family. In terms of tissue distribution, bag cell neurons.

It localises to the secreted. Its function is as follows. ELH acts as a neurotransmitter locally, upon neurons of the abdominal ganglion and as a hormone by diffusing into the circulating hemolymph and modulating the activity of other organs. It specifically causes contraction of smooth muscle in the ovotestis and expulsion of the egg string. Functionally, alpha-BCP decreases the activity of a cluster of neurons in the left upper quadrant of the abdominal ganglion. Beta-BCP specifically excites 2 neurons, L1 and R1, in the abdominal ganglion. This chain is ELH type 2 (ELH2), found in Aplysia parvula (Dwarf sea hare).